The chain runs to 1520 residues: Putative lipoprotein AcfD homolog (1520 aa).

A signal peptide spans 1-23; the sequence is MNKKFKYKKSLLAAILSATLLAG. Disordered stretches follow at residues 22–107 and 226–247; these read AGCD…GATC and NAAT…TTPG. Cys24 carries the N-palmitoyl cysteine lipid modification. Residue Cys24 is the site of S-diacylglycerol cysteine attachment. A compositionally biased stretch (low complexity) spans 31–42; sequence SSSDTPPVDSGT. Over residues 51 to 77 the composition is skewed to pro residues; sequence DPTPNPEPTPEPTPDPEPTPEPIPDPE. Polar residues predominate over residues 97-107; that stretch reads GGSQRVTGATC. Positions 234 to 247 are enriched in low complexity; the sequence is STHTSPVVPVTTPG. Residues 1081-1381 enclose the Peptidase M60 domain; it reads GNMQSTGLWA…MYAQLKEWAE (301 aa). The segment at 1498–1520 is disordered; the sequence is DLPKPEQGPETINQVTEHKMSAE.

The protein to V.cholerae AcfD (VC_0845).

It is found in the cell inner membrane. Functionally, involved in a type II secretion system (T2SS, formerly general secretion pathway, GSP) for the export of folded proteins across the outer membrane. The protein is Putative lipoprotein AcfD homolog (yghJ) of Escherichia coli (strain K12).